The sequence spans 191 residues: Thymidine kinase (191 aa).

Residues 15-22 (GPMYSGKT) and 88-91 (DEAQ) contribute to the ATP site. Residue glutamate 89 is the Proton acceptor of the active site. 4 residues coordinate Zn(2+): cysteine 145, cysteine 148, cysteine 183, and cysteine 186.

Belongs to the thymidine kinase family. In terms of assembly, homotetramer.

It localises to the cytoplasm. It catalyses the reaction thymidine + ATP = dTMP + ADP + H(+). This Clostridium botulinum (strain Hall / ATCC 3502 / NCTC 13319 / Type A) protein is Thymidine kinase.